The sequence spans 510 residues: D-alanine--D-alanyl carrier protein ligase (510 aa).

157–158 (TS) lines the ATP pocket. Aspartate 202 provides a ligand contact to D-alanine. ATP is bound at residue 297–302 (NTYGPT). Valine 306 is a D-alanine binding site. Positions 389 and 498 each coordinate ATP. Lysine 498 is a D-alanine binding site.

The protein belongs to the ATP-dependent AMP-binding enzyme family. DltA subfamily.

The protein localises to the cytoplasm. It carries out the reaction holo-[D-alanyl-carrier protein] + D-alanine + ATP = D-alanyl-[D-alanyl-carrier protein] + AMP + diphosphate. Its pathway is cell wall biogenesis; lipoteichoic acid biosynthesis. Its function is as follows. Catalyzes the first step in the D-alanylation of lipoteichoic acid (LTA), the activation of D-alanine and its transfer onto the D-alanyl carrier protein (Dcp) DltC. In an ATP-dependent two-step reaction, forms a high energy D-alanyl-AMP intermediate, followed by transfer of the D-alanyl residue as a thiol ester to the phosphopantheinyl prosthetic group of the Dcp. D-alanylation of LTA plays an important role in modulating the properties of the cell wall in Gram-positive bacteria, influencing the net charge of the cell wall. The sequence is that of D-alanine--D-alanyl carrier protein ligase from Listeria monocytogenes serotype 4a (strain HCC23).